A 686-amino-acid chain; its full sequence is Translation initiation factor IF-2 (686 aa).

The interval 54 to 105 is disordered; the sequence is KPSVADEFEVEEKVVRSKKNSNKKKKKGKGNEDKRQENFAGRQQTQTVETPD. Over residues 69–81 the composition is skewed to basic residues; sequence RSKKNSNKKKKKG. Residues 188 to 357 enclose the tr-type G domain; sequence ERPAVVTIMG…LLISEVEEYK (170 aa). The tract at residues 197-204 is G1; it reads GHVDHGKT. 197 to 204 is a GTP binding site; that stretch reads GHVDHGKT. The segment at 222–226 is G2; the sequence is GITQH. The tract at residues 243-246 is G3; it reads DTPG. Residues 243 to 247 and 297 to 300 contribute to the GTP site; these read DTPGH and NKMD. The tract at residues 297–300 is G4; sequence NKMD. The tract at residues 333–335 is G5; the sequence is SAI.

This sequence belongs to the TRAFAC class translation factor GTPase superfamily. Classic translation factor GTPase family. IF-2 subfamily.

Its subcellular location is the cytoplasm. In terms of biological role, one of the essential components for the initiation of protein synthesis. Protects formylmethionyl-tRNA from spontaneous hydrolysis and promotes its binding to the 30S ribosomal subunits. Also involved in the hydrolysis of GTP during the formation of the 70S ribosomal complex. The polypeptide is Translation initiation factor IF-2 (Bacillus anthracis (strain A0248)).